A 186-amino-acid chain; its full sequence is TATA box-binding protein-like 1 (186 aa).

Belongs to the TBP family.

It is found in the cytoplasm. It localises to the nucleus. Functionally, part of a specialized transcription system that mediates the transcription of most ribosomal proteins through the 5'-TCT-3' motif which is a core promoter element at these genes. Seems to also mediate the transcription of NF1. Does not bind the TATA box. Members of the TBP family are differentially required to regulate transcription and development during early embryogenesis. This Danio rerio (Zebrafish) protein is TATA box-binding protein-like 1.